The sequence spans 38 residues: Photosystem II reaction center protein L (38 aa).

Residues S17 to F37 form a helical membrane-spanning segment.

It belongs to the PsbL family. As to quaternary structure, PSII is composed of 1 copy each of membrane proteins PsbA, PsbB, PsbC, PsbD, PsbE, PsbF, PsbH, PsbI, PsbJ, PsbK, PsbL, PsbM, PsbT, PsbX, PsbY, PsbZ, Psb30/Ycf12, at least 3 peripheral proteins of the oxygen-evolving complex and a large number of cofactors. It forms dimeric complexes.

The protein resides in the plastid membrane. Its function is as follows. One of the components of the core complex of photosystem II (PSII). PSII is a light-driven water:plastoquinone oxidoreductase that uses light energy to abstract electrons from H(2)O, generating O(2) and a proton gradient subsequently used for ATP formation. It consists of a core antenna complex that captures photons, and an electron transfer chain that converts photonic excitation into a charge separation. This subunit is found at the monomer-monomer interface and is required for correct PSII assembly and/or dimerization. In Aneura mirabilis (Parasitic liverwort), this protein is Photosystem II reaction center protein L.